Here is a 389-residue protein sequence, read N- to C-terminus: Nicotinate phosphoribosyltransferase (389 aa).

Phosphohistidine; by autocatalysis is present on histidine 216.

This sequence belongs to the NAPRTase family. Post-translationally, transiently phosphorylated on a His residue during the reaction cycle. Phosphorylation strongly increases the affinity for substrates and increases the rate of nicotinate D-ribonucleotide production. Dephosphorylation regenerates the low-affinity form of the enzyme, leading to product release.

The enzyme catalyses nicotinate + 5-phospho-alpha-D-ribose 1-diphosphate + ATP + H2O = nicotinate beta-D-ribonucleotide + ADP + phosphate + diphosphate. It functions in the pathway cofactor biosynthesis; NAD(+) biosynthesis; nicotinate D-ribonucleotide from nicotinate: step 1/1. Functionally, catalyzes the synthesis of beta-nicotinate D-ribonucleotide from nicotinate and 5-phospho-D-ribose 1-phosphate at the expense of ATP. This Ralstonia nicotianae (strain ATCC BAA-1114 / GMI1000) (Ralstonia solanacearum) protein is Nicotinate phosphoribosyltransferase.